The following is a 153-amino-acid chain: Histone H2B.3 (153 aa).

2 stretches are compositionally biased toward basic and acidic residues: residues 1-28 (MAPKAEKKPAAKKPAEEEPAAEKAEKAP) and 36-53 (EKRLPAGKAEKGSGEGRK). The interval 1–61 (MAPKAEKKPA…RKAGRKKAKK (61 aa)) is disordered. Lys7 and Lys37 each carry N6-acetyllysine. Lys149 is covalently cross-linked (Glycyl lysine isopeptide (Lys-Gly) (interchain with G-Cter in ubiquitin)).

Belongs to the histone H2B family. In terms of assembly, the nucleosome is a histone octamer containing two molecules each of H2A, H2B, H3 and H4 assembled in one H3-H4 heterotetramer and two H2A-H2B heterodimers. The octamer wraps approximately 147 bp of DNA. Post-translationally, can be acetylated to form H2BK6ac and H2BK33ac. In terms of processing, monoubiquitinated by BRE1 to form H2BK143ub1 and deubiquitinated by UBP26. Required for heterochromatic histone H3 di- and trimethylation at H3K4me. May give a specific tag for epigenetic transcriptional activation.

The protein resides in the nucleus. It localises to the chromosome. Functionally, core component of nucleosome. Nucleosomes wrap and compact DNA into chromatin, limiting DNA accessibility to the cellular machineries which require DNA as a template. Histones thereby play a central role in transcription regulation, DNA repair, DNA replication and chromosomal stability. DNA accessibility is regulated via a complex set of post-translational modifications of histones, also called histone code, and nucleosome remodeling. The protein is Histone H2B.3 (H2B.3) of Oryza sativa subsp. japonica (Rice).